The primary structure comprises 515 residues: 13S globulin seed storage protein (515 aa).

The signal sequence occupies residues 1–22; sequence MSTKLILSFSLCLMVLSCSAQA. The interval 23 to 96 is igE-binding epitope; it reads AQLWPWRKGQ…RYVIQPGGLL (74 aa). Cystine bridges form between cysteine 47/cysteine 80 and cysteine 123/cysteine 327. Residues 52–272 form the Cupin type-1 1 domain; that stretch reads LTASEPSRRV…FRDVDRETIS (221 aa). The igE-binding epitope with a very strong IgE-binding activity stretch occupies residues 97–172; that stretch reads LPSYSNAPYI…REGDVIPSPA (76 aa). Disordered regions lie at residues 123–156, 210–241, and 295–320; these read CPET…GDQH, LAGQ…ESDD, and PEDS…GRSN. Composition is skewed to basic and acidic residues over residues 141 to 156, 217 to 239, and 295 to 316; these read HSRE…GDQH, GREE…SRES, and PEDS…ERGS. 2 igE-binding epitope regions span residues 173–248 and 249–320; these read GVVQ…LIGA and NILS…GRSN. One can recognise a Cupin type-1 2 domain in the interval 333–482; sequence QNVNRPSHAD…SYDISTEEAY (150 aa). An igE-binding epitope with a strong IgE-binding activity region spans residues 347–387; sequence RAGRINTVNSNNLPILEFLQLSAQHVVLYKNAIIGPRWNLN. IgE-binding epitope stretches follow at residues 407-457, 440-476, and 475-511; these read EGKS…PIAG, EWVE…SYDI, and DIST…ERER.

This sequence belongs to the 11S seed storage protein (globulins) family. In terms of assembly, homohexamer. Proteolytically processed from a single precursor to produce an acidic and a basic chain that are linked by a disulfide bond. As to expression, expressed in seeds (at protein level).

Its function is as follows. Seed storage protein. The sequence is that of 13S globulin seed storage protein from Fagopyrum tataricum (Tartarian buckwheat).